We begin with the raw amino-acid sequence, 181 residues long: uncharacterized protein (181 aa).

Residues 1-22 (MNKKSLLVVLVIALAVVPFAAT) form the signal peptide.

This is an uncharacterized protein from Halorubrum pleomorphic virus 1 (HRPV-1).